Reading from the N-terminus, the 136-residue chain is Acyl carrier protein 1, chloroplastic (136 aa).

The N-terminal 52 residues, 1–52 (MASVTGTSISMASFKASLAPSRVSNLRSVSLPIKGKSFAPLRMRSARFVVCC), are a transit peptide targeting the chloroplast. In terms of domain architecture, Carrier spans 56-131 (PETVEKVCAI…DAADLIEKLI (76 aa)). Serine 91 carries the O-(pantetheine 4'-phosphoryl)serine modification.

It belongs to the acyl carrier protein (ACP) family. 4'-phosphopantetheine is transferred from CoA to a specific serine of apo-ACP by acpS. This modification is essential for activity because fatty acids are bound in thioester linkage to the sulfhydryl of the prosthetic group.

The protein localises to the plastid. It is found in the chloroplast. Its pathway is lipid metabolism; fatty acid biosynthesis. Functionally, carrier of the growing fatty acid chain in fatty acid biosynthesis. This chain is Acyl carrier protein 1, chloroplastic (ACP1), found in Casuarina glauca (Swamp oak).